The primary structure comprises 690 residues: Elongation factor G (690 aa).

One can recognise a tr-type G domain in the interval 8-282 (KMTRNIGIMA…AVIDYLPSPL (275 aa)). GTP-binding positions include 17-24 (AHIDAGKT), 81-85 (DTPGH), and 135-138 (NKMD).

Belongs to the TRAFAC class translation factor GTPase superfamily. Classic translation factor GTPase family. EF-G/EF-2 subfamily.

It localises to the cytoplasm. Its function is as follows. Catalyzes the GTP-dependent ribosomal translocation step during translation elongation. During this step, the ribosome changes from the pre-translocational (PRE) to the post-translocational (POST) state as the newly formed A-site-bound peptidyl-tRNA and P-site-bound deacylated tRNA move to the P and E sites, respectively. Catalyzes the coordinated movement of the two tRNA molecules, the mRNA and conformational changes in the ribosome. This chain is Elongation factor G, found in Acholeplasma laidlawii (strain PG-8A).